The chain runs to 131 residues: C-glycoside deglycosidase beta subunit (131 aa).

This sequence belongs to the C-glycoside deglycosidase beta subunit family. Heterodimer composed of an alpha subunit (CarB) and a beta subunit (CarC). It depends on a divalent metal cation as a cofactor.

The enzyme catalyses 3''-dehydroisovitexin = 1,5-anhydro-D-erythro-hex-1-en-3-ulose + apigenin. The catalysed reaction is 3''-dehydroisoorientin = 1,5-anhydro-D-erythro-hex-1-en-3-ulose + luteolin. In terms of biological role, carbon-carbon bond-cleaving enzyme which participates in the metabolism of C-glycosides. Acts on the C6-glycosylated compounds 3''-dehydroisovitexin (3''-oxo-isovitexin) and 3''-dehydroisoorientin (3''-oxo-homoorientin). Shows weak activity with 3'-dehydromangiferin (3'-oxo-mangiferin). In Microbacterium trichothecenolyticum (Aureobacterium trichothecenolyticum), this protein is C-glycoside deglycosidase beta subunit.